Consider the following 461-residue polypeptide: Divalent metal cation transporter MntH (461 aa).

The next 11 membrane-spanning stretches (helical) occupy residues 56–76, 89–109, 132–152, 160–180, 193–213, 230–250, 285–305, 322–342, 378–398, 399–419, and 433–453; these read AMAF…PGNW, TLLA…SLCA, AMVL…AEVI, LIFG…VFLI, ALVI…LALA, IVTN…TVMP, IALM…AATF, LLAP…ALLC, AIAI…GTGQ, LLIL…FPLV, and SPLW…ALNV.

This sequence belongs to the NRAMP family.

It localises to the cell inner membrane. Its function is as follows. H(+)-stimulated, divalent metal cation uptake system. The protein is Divalent metal cation transporter MntH of Agrobacterium fabrum (strain C58 / ATCC 33970) (Agrobacterium tumefaciens (strain C58)).